We begin with the raw amino-acid sequence, 1387 residues long: DNA-directed RNA polymerase subunit beta' (1387 aa).

Zn(2+) contacts are provided by C70, C72, C85, and C88. 3 residues coordinate Mg(2+): D461, D463, and D465. Positions 808, 882, 889, and 892 each coordinate Zn(2+). A disordered region spans residues 1367-1387 (QDEAKGVGQETPRLSGQEAAE).

The protein belongs to the RNA polymerase beta' chain family. As to quaternary structure, the RNAP catalytic core consists of 2 alpha, 1 beta, 1 beta' and 1 omega subunit. When a sigma factor is associated with the core the holoenzyme is formed, which can initiate transcription. It depends on Mg(2+) as a cofactor. Zn(2+) serves as cofactor.

The catalysed reaction is RNA(n) + a ribonucleoside 5'-triphosphate = RNA(n+1) + diphosphate. Functionally, DNA-dependent RNA polymerase catalyzes the transcription of DNA into RNA using the four ribonucleoside triphosphates as substrates. In Granulibacter bethesdensis (strain ATCC BAA-1260 / CGDNIH1), this protein is DNA-directed RNA polymerase subunit beta'.